A 447-amino-acid chain; its full sequence is MKPVIALVGRPNVGKSTLFNRLTKSRDAIVADFAGLTRDRHYGNGRQGKHEYIVIDTGGFEPDASSGIYREMARQTQQAVAEADVVVFVVDVRGGLSAQDHDIANYLRRLGKPCVLAGNKAEGMQDSMHLAEFYELGLGEVHPVSAAHGQGVRSLVDLALKPLALPEIEEEDAAAEKNVIRLAVAGRPNVGKSTLINTWLGEERLVAFDMPGTTRDAISVPFERNGQKFELIDTAGLRRKGKVFEAIEKFSVVKTLQAIESANVVLLLLDATQGVTDQDAHIAGYILESGRAVVIAVNKWDAVDDYGRQQLERSIETRLSFLKFAPLHFISAKKRQGIGPLWSSIIQAYKSANRKMPTPVLTRLLQEAVQFQSPKRSGMFRPKMRYAHQGGMNPPVIVIHGNSLEHVTDAYKRFLEARFRKEFDLVGTPLRIEMKTSSNPYTDKQNS.

EngA-type G domains lie at 3–167 (PVIA…ALPE) and 180–353 (IRLA…KSAN). GTP contacts are provided by residues 9-16 (GRPNVGKS), 56-60 (DTGGF), 119-122 (NKAE), 186-193 (GRPNVGKS), 233-237 (DTAGL), and 298-301 (NKWD). Residues 354–438 (RKMPTPVLTR…PLRIEMKTSS (85 aa)) enclose the KH-like domain.

This sequence belongs to the TRAFAC class TrmE-Era-EngA-EngB-Septin-like GTPase superfamily. EngA (Der) GTPase family. Associates with the 50S ribosomal subunit.

Its function is as follows. GTPase that plays an essential role in the late steps of ribosome biogenesis. The polypeptide is GTPase Der (Acidovorax ebreus (strain TPSY) (Diaphorobacter sp. (strain TPSY))).